The following is a 210-amino-acid chain: Na(+)-translocating NADH-quinone reductase subunit D (210 aa).

Transmembrane regions (helical) follow at residues 14–34 (PIVN…ALAV), 42–62 (LVMA…ISMI), 72–92 (IIVQ…LLQA), 103–123 (VFVG…AYAM), 131–151 (FMDG…VGFV), and 178–198 (NGLL…IWII).

Belongs to the NqrDE/RnfAE family. In terms of assembly, composed of six subunits; NqrA, NqrB, NqrC, NqrD, NqrE and NqrF.

It localises to the cell inner membrane. It carries out the reaction a ubiquinone + n Na(+)(in) + NADH + H(+) = a ubiquinol + n Na(+)(out) + NAD(+). Functionally, NQR complex catalyzes the reduction of ubiquinone-1 to ubiquinol by two successive reactions, coupled with the transport of Na(+) ions from the cytoplasm to the periplasm. NqrA to NqrE are probably involved in the second step, the conversion of ubisemiquinone to ubiquinol. This chain is Na(+)-translocating NADH-quinone reductase subunit D, found in Shewanella sp. (strain ANA-3).